The sequence spans 606 residues: Retrovirus-related Pol polyprotein from type-1 retrotransposable element R2 (606 aa).

The Reverse transcriptase domain occupies 1–208; sequence GTLANIIMLE…NTFKYLGLTF (208 aa). The tract at residues 331–606 is nucleic acid-binding endonuclease; it reads IFNIEGPARS…PPDPPRPVPP (276 aa).

The enzyme catalyses DNA(n) + a 2'-deoxyribonucleoside 5'-triphosphate = DNA(n+1) + diphosphate. The sequence is that of Retrovirus-related Pol polyprotein from type-1 retrotransposable element R2 from Popillia japonica (Japanese beetle).